Here is a 376-residue protein sequence, read N- to C-terminus: Erythronate-4-phosphate dehydrogenase (376 aa).

Ser-45 and Thr-66 together coordinate substrate. Residues Asp-146 and Thr-175 each contribute to the NAD(+) site. The active site involves Arg-209. Asp-233 is an NAD(+) binding site. Glu-238 is a catalytic residue. His-255 acts as the Proton donor in catalysis. An NAD(+)-binding site is contributed by Gly-258. Tyr-259 contributes to the substrate binding site.

This sequence belongs to the D-isomer specific 2-hydroxyacid dehydrogenase family. PdxB subfamily. In terms of assembly, homodimer.

The protein resides in the cytoplasm. The enzyme catalyses 4-phospho-D-erythronate + NAD(+) = (R)-3-hydroxy-2-oxo-4-phosphooxybutanoate + NADH + H(+). Its pathway is cofactor biosynthesis; pyridoxine 5'-phosphate biosynthesis; pyridoxine 5'-phosphate from D-erythrose 4-phosphate: step 2/5. Its function is as follows. Catalyzes the oxidation of erythronate-4-phosphate to 3-hydroxy-2-oxo-4-phosphonooxybutanoate. The protein is Erythronate-4-phosphate dehydrogenase of Baumannia cicadellinicola subsp. Homalodisca coagulata.